The chain runs to 260 residues: Thiazole synthase (260 aa).

Residue Lys100 is the Schiff-base intermediate with DXP of the active site. 1-deoxy-D-xylulose 5-phosphate-binding positions include Gly162, 188 to 189 (AG), and 210 to 211 (NT).

It belongs to the ThiG family. In terms of assembly, homotetramer. Forms heterodimers with either ThiH or ThiS.

Its subcellular location is the cytoplasm. It catalyses the reaction [ThiS sulfur-carrier protein]-C-terminal-Gly-aminoethanethioate + 2-iminoacetate + 1-deoxy-D-xylulose 5-phosphate = [ThiS sulfur-carrier protein]-C-terminal Gly-Gly + 2-[(2R,5Z)-2-carboxy-4-methylthiazol-5(2H)-ylidene]ethyl phosphate + 2 H2O + H(+). Its pathway is cofactor biosynthesis; thiamine diphosphate biosynthesis. Its function is as follows. Catalyzes the rearrangement of 1-deoxy-D-xylulose 5-phosphate (DXP) to produce the thiazole phosphate moiety of thiamine. Sulfur is provided by the thiocarboxylate moiety of the carrier protein ThiS. In vitro, sulfur can be provided by H(2)S. The polypeptide is Thiazole synthase (Wolinella succinogenes (strain ATCC 29543 / DSM 1740 / CCUG 13145 / JCM 31913 / LMG 7466 / NCTC 11488 / FDC 602W) (Vibrio succinogenes)).